A 534-amino-acid chain; its full sequence is MSEVSNEAARRRTFAIISHPDAGKTTLTEKLLLFGGAIQMAGSVKGRKAARHATSDWMALEKERGISVTSSVMQFPYEDKIVNLLDTPGHADFGEDTYRVLTAVDSALMVIDVAKGVEERTIKLMEVCRLRDTPIMTFINKLDREGKNPIDLLDEVETVLGIQCAPVTWPIGMGQRLKGVVHLITGEVHLYEQGRNFTRQDSTIFPSLDAPGLAEKIGTQMLDELREELELVQGASNPFDLDAYRAGQQTPVFFGSGVNNFGVQPLLDFFVEHAPPPQARDTTGRRVEAVEPKLSGFVFKIQANMDPQHRDRVAFMRVCSGKFTAGMKALHVRSGKDVKLANALTFMASDREIAAEAWPGDVIGIHNHGTISIGDTFTEGESLSFTGIPNFAPELFRRARLRDPLKLKQLQKGLAQLSEEGATQFFRPLMSNDLILGAVGVLQFDVVAYRLKDEYGVDAIFEPVSVTTARWVHCDNPKKLEEFREKNAGNLGIDAAGQLVYLAPTRVNLQLAQERAPDVRFSATREHAYATAVD.

The region spanning 9–278 is the tr-type G domain; sequence ARRRTFAIIS…FFVEHAPPPQ (270 aa). Residues 18–25, 86–90, and 140–143 contribute to the GTP site; these read SHPDAGKT, DTPGH, and NKLD.

Belongs to the TRAFAC class translation factor GTPase superfamily. Classic translation factor GTPase family. PrfC subfamily.

The protein resides in the cytoplasm. Increases the formation of ribosomal termination complexes and stimulates activities of RF-1 and RF-2. It binds guanine nucleotides and has strong preference for UGA stop codons. It may interact directly with the ribosome. The stimulation of RF-1 and RF-2 is significantly reduced by GTP and GDP, but not by GMP. The chain is Peptide chain release factor 3 from Xanthomonas campestris pv. campestris (strain 8004).